Here is a 71-residue protein sequence, read N- to C-terminus: Cytotoxic linear peptide IsCT2 (71 aa).

Positions 1–23 (MKTQFAILLVALVLFQMFAQSEA) are cleaved as a signal peptide. The residue at position 36 (Phe-36) is a Phenylalanine amide. Residues 40–71 (ALNNDLDLDGLDELFDGEISQADVDFLKELMR) constitute a propeptide that is removed on maturation.

This sequence belongs to the non-disulfide-bridged peptide (NDBP) superfamily. Short antimicrobial peptide (group 4) family. IsCT2F is an enzymatic proteolytic cleavage product of IsCT2 by the proteases present in the venom. In terms of tissue distribution, expressed by the venom gland.

It is found in the secreted. The protein localises to the target cell membrane. In terms of biological role, isCT2 shows weak hemolytic activity and antibacterial activity against both Gram-positive and Gram-negative bacteria probably by forming pores in the cell membrane. IsCT2 adopts an amphipathic alpha-helical structure. Functionally, isCT2f shows neither hemolytic, nor antibacterial activities, surely due to the fact that it cannot apply amphipathic alpha-helical structure. This is Cytotoxic linear peptide IsCT2 from Opisthacanthus madagascariensis (Scorpion).